Here is a 166-residue protein sequence, read N- to C-terminus: Large ribosomal subunit protein uL10 (166 aa).

The protein belongs to the universal ribosomal protein uL10 family. Part of the ribosomal stalk of the 50S ribosomal subunit. The N-terminus interacts with L11 and the large rRNA to form the base of the stalk. The C-terminus forms an elongated spine to which L12 dimers bind in a sequential fashion forming a multimeric L10(L12)X complex.

Forms part of the ribosomal stalk, playing a central role in the interaction of the ribosome with GTP-bound translation factors. The polypeptide is Large ribosomal subunit protein uL10 (Staphylococcus haemolyticus (strain JCSC1435)).